Consider the following 561-residue polypeptide: Arginine--tRNA ligase (561 aa).

Positions 129-139 (ANPTGPLHVGH) match the 'HIGH' region motif.

The protein belongs to the class-I aminoacyl-tRNA synthetase family. In terms of assembly, monomer.

Its subcellular location is the cytoplasm. The catalysed reaction is tRNA(Arg) + L-arginine + ATP = L-arginyl-tRNA(Arg) + AMP + diphosphate. The polypeptide is Arginine--tRNA ligase (Bordetella parapertussis (strain 12822 / ATCC BAA-587 / NCTC 13253)).